Reading from the N-terminus, the 874-residue chain is Endothelial PAS domain-containing protein 1 (874 aa).

Positions 1-23 (MTADKEKKRSSSELRKEKSRDAA) are disordered. In terms of domain architecture, bHLH spans 14-67 (LRKEKSRDAARCRRSKETEVFYELAHELPLPHSVSSHLDKASIMRLAISFLRTH). The interval 26–53 (RRSKETEVFYELAHELPLPHSVSSHLDK) is DNA-binding. A PAS 1 domain is found at 84–154 (DQQMDNLYLK…ENLTLKNGSG (71 aa)). The segment at 171–192 (RMKCTVTNRGRTVNLKSATWKV) is required for heterodimer formation with ARNT. The 71-residue stretch at 230–300 (QHPSHMDIPL…KSHQNLCTKG (71 aa)) folds into the PAS 2 domain. Positions 304–347 (SGQYRMLAKHGGYVWLETQGTVIYNPRNLQPQCIMCVNYVLSEI) constitute a PAC domain. Proline 405 carries the 4-hydroxyproline modification. Residues 438–489 (WVSGLRSHSAQSESGSLPAFTVPQADTPGNTTPSASSSSSCSTPSSPEDYYS) are disordered. Residues 443-452 (RSHSAQSESG) are compositionally biased toward polar residues. The span at 464–484 (TPGNTTPSASSSSSCSTPSSP) shows a compositional bias: low complexity. An NTAD region spans residues 495–541 (LKIEVIEKLFAMDTEPRDPGSTQTDFSELDLETLAPYIPMDGEDFQL). The residue at position 530 (proline 530) is a 4-hydroxyproline. Residues 777 to 803 (LGQPLRHLPPPQPPSTRSSGENAKTGF) are disordered. The interval 834-874 (SFEPYLLPELTRYDCEVNVPVPGSSTLLQGRDLLRALDQAT) is CTAD. Position 844 is a phosphothreonine (threonine 844). The residue at position 851 (asparagine 851) is a (3S)-3-hydroxyasparagine.

In terms of assembly, interacts with HIF3A isoform 2. Efficient DNA binding requires dimerization with another bHLH protein. Heterodimerizes with ARNT; heterodimer binds to core DNA sequence 5'-TACGTG-3' within the hypoxia response element (HRE) of target gene promoters. Interacts with CREBBP. Interacts with EGLN1. Interacts with VHL. In normoxia, is probably hydroxylated on Pro-405 and Pro-530 by EGLN1/PHD1, EGLN2/PHD2 and/or EGLN3/PHD3. The hydroxylated prolines promote interaction with VHL, initiating rapid ubiquitination and subsequent proteasomal degradation. Under hypoxia, proline hydroxylation is impaired and ubiquitination is attenuated, resulting in stabilization. Post-translationally, in normoxia, is hydroxylated on Asn-851 by HIF1AN thus probably abrogating interaction with CREBBP and EP300 and preventing transcriptional activation. In terms of processing, phosphorylated on multiple sites in the CTAD. The iron and 2-oxoglutarate dependent 3-hydroxylation of asparagine is (S) stereospecific within HIF CTAD domains. Expressed in most tissues, with highest levels in lung, followed by heart, kidney, brain and liver. Predominantly expressed in endothelial cells. Also found in smooth muscle cells of the uterus, neurons, and brown adipose tissue. High expression in embryonic choroid plexus and kidney glomeruli.

Its subcellular location is the nucleus. The protein resides in the nucleus speckle. Functionally, transcription factor involved in the induction of oxygen regulated genes. Heterodimerizes with ARNT; heterodimer binds to core DNA sequence 5'-TACGTG-3' within the hypoxia response element (HRE) of target gene promoters. Regulates the vascular endothelial growth factor (VEGF) expression and seems to be implicated in the development of blood vessels and the tubular system of lung. May also play a role in the formation of the endothelium that gives rise to the blood brain barrier. Potent activator of the Tie-2 tyrosine kinase expression. Activation requires recruitment of transcriptional coactivators such as CREBBP and probably EP300. Interaction with redox regulatory protein APEX seems to activate CTAD. This chain is Endothelial PAS domain-containing protein 1 (Epas1), found in Mus musculus (Mouse).